A 292-amino-acid polypeptide reads, in one-letter code: Small ribosomal subunit protein uS3 (292 aa).

The region spanning 39-110 (IRLEIMKFLK…KISIKIKEVK (72 aa)) is the KH type-2 domain. The disordered stretch occupies residues 247–268 (KANERQSRAALNKKDGLSKDET).

Belongs to the universal ribosomal protein uS3 family. As to quaternary structure, part of the 30S ribosomal subunit. Forms a tight complex with proteins S10 and S14.

Functionally, binds the lower part of the 30S subunit head. Binds mRNA in the 70S ribosome, positioning it for translation. In Borrelia garinii subsp. bavariensis (strain ATCC BAA-2496 / DSM 23469 / PBi) (Borreliella bavariensis), this protein is Small ribosomal subunit protein uS3.